The chain runs to 973 residues: Nuclear factor NF-kappa-B p105 subunit (973 aa).

In terms of domain architecture, RHD spans Ala-38 to Asn-245. The residue at position 60 (Cys-60) is an S-nitrosocysteine; alternate. A lipid anchor (S-(15-deoxy-Delta12,14-prostaglandin J2-9-yl)cysteine; alternate) is attached at Cys-60. Lys-324 participates in a covalent cross-link: Glycyl lysine isopeptide (Lys-Gly) (interchain with G-Cter in SUMO2). Ser-336 carries the phosphoserine modification. The Nuclear localization signal signature appears at Gln-359–Lys-364. A GRR region spans residues Asp-371–Gly-394. Residues Thr-434–Pro-467 form a disordered region. The tract at residues Ile-435–Ile-973 is interaction with CFLAR. Basic and acidic residues predominate over residues Phe-439 to Gln-463. Position 440 is an N6-acetyllysine (Lys-440). Ser-449 carries the post-translational modification Phosphoserine. ANK repeat units follow at residues Asn-540 to Asp-570, Leu-579 to Leu-608, Trp-612 to Leu-641, Glu-648 to Ala-677, Ser-682 to Asp-711, and Asp-716 to Val-745. The interval Glu-648 to Ser-682 is essential for interaction with HIF1AN. Asn-676 carries the (3S)-3-hydroxyasparagine; by HIF1AN modification. Residue Ser-757 is modified to Phosphoserine. An ANK 7 repeat occupies Pro-769–Asp-799. One can recognise a Death domain in the interval Gln-803–Phe-890. Position 898 is a phosphoserine (Ser-898). A Phosphoserine; by GSK3-beta; in vitro modification is found at Ser-912. Ser-928 bears the Phosphoserine mark. Residues Ser-932 and Ser-937 each carry the phosphoserine; by IKKB modification. Ser-942 carries the phosphoserine modification. Thr-948 is modified (phosphothreonine).

As to quaternary structure, component of the NF-kappa-B p65-p50 complex. Homodimer; component of the NF-kappa-B p50-p50 complex. Component of the NF-kappa-B p105-p50 complex. Component of the NF-kappa-B p50-c-Rel complex. Component of a complex consisting of the NF-kappa-B p50-p50 homodimer and BCL3. Also interacts with MAP3K8. NF-kappa-B p50 subunit interacts with NCOA3 coactivator, which may coactivate NF-kappa-B dependent expression via its histone acetyltransferase activity. Interacts with TSC22D3; this interaction prevents nuclear translocation and DNA-binding. Interacts with SPAG9 and UNC5CL. NFKB1/p105 interacts with CFLAR; the interaction inhibits p105 processing into p50. NFKB1/p105 forms a ternary complex with MAP3K8 and TNIP2. Interacts with GSK3B; the interaction prevents processing of p105 to p50. NFKB1/p50 interacts with NFKBIE. NFKB1/p50 interacts with NFKBIZ. Nuclear factor NF-kappa-B p50 subunit interacts with NFKBID. Directly interacts with MEN1. Interacts with HIF1AN. Interacts with FEM1A; interaction is direct. Generation of the NF-kappa-B p50 (Nuclear factor NF-kappa-B p50 subunit) transcription factor takes place both cotranslationally and post-translationally via non-mutually exclusive mechanisms. A cotranslational processing allows the production of both p50 and p105 (Nuclear factor NF-kappa-B p105 subunit) from a single NFKB1 mRNA. While translation occurs, the particular unfolded structure after the GRR repeat region acts as a substrate for the proteasome, promoting degradation of the C-terminus. The GRR acts as a proteasomal 'stop signal', protecting the region upstream of the GRR from degradation and promoting generation of p50. It is unclear if limited proteasome degradation during cotranslational processing depends on ubiquitination. NF-kappa-B p50 is also generated post-translationally following ubiquitination by the KPC complex, leading to limited processing by the proteasome downstream of the GRR region, thereby generating p50. In terms of processing, phosphorylation at the C-terminus by IKBKB/IKKB acts as a signal for ubiquitination and promotes either complete degradation or processing to generate the NF-kappa-B p50 (Nuclear factor NF-kappa-B p50 subunit). Phosphorylation at Ser-912 primes p105 for proteolytic processing in response to TNF-alpha stimulation. Phosphorylation at Ser-928, Ser-932 and Ser-937 are required for BTRC/BTRCP-mediated ubiquitination and proteolysis. Phosphorylation at Ser-932 is also required for ubiquitination by the KPC complex and limited processing to generate NF-kappa-B p50 (Nuclear factor NF-kappa-B p50 subunit). Post-translationally, polyubiquitinated at multiple Lys residues in the C-terminus. Polyubiquitinated by the SCF(FBXW11) and SCF(BTRC) complexes following phosphorylation at Ser-928, Ser-932 and Ser-937, leading to its complete degradation. In contrast, polyubiquitination by the KPC complex following phosphorylation at Ser-932 leads to limited proteosomal processing and generation of the active NF-kappa-B p50 (Nuclear factor NF-kappa-B p50 subunit). S-nitrosylation of Cys-60 affects DNA binding. In terms of processing, the covalent modification of cysteine by 15-deoxy-Delta12,14-prostaglandin-J2 is autocatalytic and reversible. It may occur as an alternative to other cysteine modifications, such as S-nitrosylation and S-palmitoylation.

The protein localises to the cytoplasm. Its subcellular location is the nucleus. NF-kappa-B is a pleiotropic transcription factor present in almost all cell types and is the endpoint of a series of signal transduction events that are initiated by a vast array of stimuli related to many biological processes such as inflammation, immunity, differentiation, cell growth, tumorigenesis and apoptosis. NF-kappa-B is a homo- or heterodimeric complex formed by the Rel-like domain-containing proteins RELA/p65, RELB, NFKB1/p105, NFKB1/p50, REL and NFKB2/p52 and the heterodimeric p65-p50 complex appears to be most abundant one. The dimers bind at kappa-B sites in the DNA of their target genes and the individual dimers have distinct preferences for different kappa-B sites that they can bind with distinguishable affinity and specificity. Different dimer combinations act as transcriptional activators or repressors, respectively. NF-kappa-B is controlled by various mechanisms of post-translational modification and subcellular compartmentalization as well as by interactions with other cofactors or corepressors. NF-kappa-B complexes are held in the cytoplasm in an inactive state complexed with members of the NF-kappa-B inhibitor (I-kappa-B) family. In a conventional activation pathway, I-kappa-B is phosphorylated by I-kappa-B kinases (IKKs) in response to different activators, subsequently degraded thus liberating the active NF-kappa-B complex which translocates to the nucleus. NF-kappa-B heterodimeric p65-p50 and RelB-p50 complexes are transcriptional activators. The NF-kappa-B p50-p50 homodimer is a transcriptional repressor, but can act as a transcriptional activator when associated with BCL3. NFKB1 appears to have dual functions such as cytoplasmic retention of attached NF-kappa-B proteins by p105 and generation of p50 by a cotranslational processing. The proteasome-mediated process ensures the production of both p50 and p105 and preserves their independent function, although processing of NFKB1/p105 also appears to occur post-translationally. p50 binds to the kappa-B consensus sequence 5'-GGRNNYYCC-3', located in the enhancer region of genes involved in immune response and acute phase reactions. In a complex with MAP3K8, NFKB1/p105 represses MAP3K8-induced MAPK signaling; active MAP3K8 is released by proteasome-dependent degradation of NFKB1/p105. Its function is as follows. P105 is the precursor of the active p50 subunit (Nuclear factor NF-kappa-B p50 subunit) of the nuclear factor NF-kappa-B. Acts as a cytoplasmic retention of attached NF-kappa-B proteins by p105. In terms of biological role, constitutes the active form, which associates with RELA/p65 to form the NF-kappa-B p65-p50 complex to form a transcription factor. Together with RELA/p65, binds to the kappa-B consensus sequence 5'-GGRNNYYCC-3', located in the enhancer region of genes involved in immune response and acute phase reactions. The polypeptide is Nuclear factor NF-kappa-B p105 subunit (Nfkb1) (Rattus norvegicus (Rat)).